The primary structure comprises 437 residues: UDP-sugar transporter protein SLC35A5 (437 aa).

At 1 to 21 (MKVIFLRQLKTRGMERKCSRR) the chain is on the cytoplasmic side. The chain crosses the membrane as a helical span at residues 22-42 (PGLGPPTLYTFLLGIIFITLS). The Lumenal portion of the chain corresponds to 43 to 65 (SSRILLVKYSANEENKYDYLPTT). Residues 66-86 (VNVCSELMKLILCILVSLCVI) form a helical membrane-spanning segment. Over 87–106 (KKEDHQSRHLRCTSWKEFSS) the chain is Cytoplasmic. A helical transmembrane segment spans residues 107-129 (FMKWSIPAFLYFLDNLIVFYVLS). Over 130–132 (YLQ) the chain is Lumenal. A helical transmembrane segment spans residues 133–155 (PAMAVIFSNFSIITTALLFRIVL). Residues 156–158 (KRH) are Cytoplasmic-facing. Residues 159–179 (LNWIQWASLLILFLSIVALTA) form a helical membrane-spanning segment. Residues 180 to 241 (STKTSQHELA…TTARVFSHIR (62 aa)) are Lumenal-facing. N-linked (GlcNAc...) asparagine glycosylation occurs at N217. Residues 242-262 (LGLGHVLIIVQCFISSMANIY) form a helical membrane-spanning segment. The Cytoplasmic segment spans residues 263–276 (NEKILKEGTQLTES). Residues 277–297 (IFIQNSKLYFFGIVFNGLTLV) traverse the membrane as a helical segment. Residues 298 to 316 (LQSSNRDQIQNCGFFYGHN) lie on the Lumenal side of the membrane. A helical membrane pass occupies residues 317–337 (AFSVVLIFVTAFQGLSVAFIL). The Cytoplasmic segment spans residues 338–343 (KFLDNM). A helical transmembrane segment spans residues 344 to 364 (FHVLMAQVTTVIITTVSVLVF). The Lumenal segment spans residues 365–367 (DFR). Residues 368 to 388 (PSLDFFLEAPSVLLSIFIYNA) traverse the membrane as a helical segment. Topologically, residues 389–437 (SKPQNLECAPKQERIRHLSGSLWERSSGDGEELERLTKLKSDDSDDDTL) are cytoplasmic. Phosphoserine occurs at positions 407, 429, and 432. Residues 412–437 (ERSSGDGEELERLTKLKSDDSDDDTL) form a disordered region. Residues 421 to 430 (LERLTKLKSD) show a composition bias toward basic and acidic residues.

It belongs to the nucleotide-sugar transporter family. SLC35A subfamily. Probably forms homooligomers and heterooligomers with SLC35A1, SLC35A2, SLC35A3 and SLC35A4.

It localises to the golgi apparatus membrane. It carries out the reaction UMP(out) + UDP-alpha-D-glucuronate(in) = UMP(in) + UDP-alpha-D-glucuronate(out). The catalysed reaction is UMP(out) + UDP-N-acetyl-alpha-D-glucosamine(in) = UMP(in) + UDP-N-acetyl-alpha-D-glucosamine(out). It catalyses the reaction UDP-N-acetyl-alpha-D-galactosamine(in) + UMP(out) = UDP-N-acetyl-alpha-D-galactosamine(out) + UMP(in). Its function is as follows. Probable UDP-sugar:UMP transmembrane antiporter involved in UDP-alpha-D-glucuronate/UDP-GlcA, UDP-GlcNAc/UDP-N-acetyl-alpha-D-glucosamine and UDP-N-acetyl-alpha-D-galactosamine/UDP-GalNAc transport from the cytosol to the lumen of the Golgi. This is UDP-sugar transporter protein SLC35A5 from Mus musculus (Mouse).